A 222-amino-acid polypeptide reads, in one-letter code: PKHD-type hydroxylase Syncc9902_2001 (222 aa).

The Fe2OG dioxygenase domain occupies 80–174 (RVHSILISRS…RLVCVGWIES (95 aa)). Fe cation contacts are provided by His98, Asp100, and His155. 2-oxoglutarate is bound at residue Arg165.

It depends on Fe(2+) as a cofactor. L-ascorbate is required as a cofactor.

The polypeptide is PKHD-type hydroxylase Syncc9902_2001 (Synechococcus sp. (strain CC9902)).